Consider the following 455-residue polypeptide: MELLIKLITFLLFSMPAITSSQYLGNNLLTSRKIFLKQEEISSYAVVFDAGSTGSRIHVYHFNQNLDLLHIGKGVEYYNKITPGLSSYANNPEQAAKSLIPLLEQAEDVVPDDLQPKTPVRLGATAGLRLLNGDASEKILQSVRDMLSNRSTFNVQPDAVSIIDGTQEGSYLWVTVNYALGNLGKKYTKTVGVIDLGGGSVQMAYAVSKKTAKNAPKVADGDDPYIKKVVLKGIPYDLYVHSYLHFGREASRAEILKLTPRSPNPCLLAGFNGIYTYSGEEFKATAYTSGANFNKCKNTIRKALKLNYPCPYQNCTFGGIWNGGGGNGQKNLFASSSFFYLPEDTGMVDASTPNFILRPVDIETKAKEACALNFEDAKSTYPFLDKKNVASYVCMDLIYQYVLLVDGFGLDPLQKITSGKEIEYQDAIVEAAWPLGNAVEAISALPKFERLMYFV.

The Proton acceptor role is filled by Glu168.

This sequence belongs to the GDA1/CD39 NTPase family.

It localises to the nucleus. It catalyses the reaction a ribonucleoside 5'-triphosphate + H2O = a ribonucleoside 5'-diphosphate + phosphate + H(+). Might be involved in RNA transport out of nuclei. The sequence is that of Nucleoside-triphosphatase from Pisum sativum (Garden pea).